A 611-amino-acid polypeptide reads, in one-letter code: MESMFEDDISILTQEALGPSEVWLDGPGDPSLGGDMCSASHFALITAYGDIKERLGGLERENATLRRRLKVYEIKYPLITDFGEEHGFPLYELKDGSLLEVEKVSLQQRLNQFQHELQKSKEQEEQLGEMIQAYEKLCVEKSDLETELGEMRALVETHLRQICGLEKQLQQQQGLRDAAFSSLSPPAVPASACPDLDLHYLALRGGPALGHAGWPGPTSVSVSELERRRLEEALEAAQGEARGAQLREEQLQAECERLQGELKQLQETRAQDLASNQSECDMAWVKRVGDDQVNLALAYTELTEELGRLRELSSLQGRILRTLLQEQARNAGQRHSPLSQRHSPAPACPSPSPPARPPPCAPCQSPAAQRRSPVPPCPSPQQRRSPASPSCPSPVPQRRSPVPPSCQSPSPQRRSPVPPSCPAPQPRPPPPPGERTLAERVYAKPPSHHAKAGFQGRRSYSELAEGAAYAGASPAWLQAEAATLPKPRAYGGELYGRPLSPRRAFEGIRLRFEKQPSEEEEWAMPASPPSPEAGTIRCASFCAGFPIPESPAATAYAHAEHAQSWPSINLLMETVGSDIRSCPLCQLGFPVGYPDDALIKHIDSHLENSKI.

The interval 1-280 (MESMFEDDIS…QDLASNQSEC (280 aa)) is homodimerization. The stretch at 48-162 (YGDIKERLGG…ALVETHLRQI (115 aa)) forms a coiled coil. Phosphoserine is present on S184. Residues 218 to 277 (TSVSVSELERRRLEEALEAAQGEARGAQLREEQLQAECERLQGELKQLQETRAQDLASNQ) adopt a coiled-coil conformation. The interval 281 to 330 (DMAWVKRVGDDQVNLALAYTELTEELGRLRELSSLQGRILRTLLQEQARN) is interaction with TBK1 and IKBKE. A disordered region spans residues 328–437 (ARNAGQRHSP…PPPPPGERTL (110 aa)). Positions 346–361 (PACPSPSPPARPPPCA) are enriched in pro residues. The span at 362 to 372 (PCQSPAAQRRS) shows a compositional bias: low complexity. Phosphoserine is present on residues S365, S372, S379, S385, S400, and S415. Over residues 389–406 (PSCPSPVPQRRSPVPPSC) the composition is skewed to pro residues. Positions 416-433 (PVPPSCPAPQPRPPPPPG) are enriched in pro residues. A phosphoserine mark is found at S500 and S530. The UBZ1-type zinc-finger motif lies at 579–605 (IRSCPLCQLGFPVGYPDDALIKHIDSH). Positions 582, 585, 601, and 605 each coordinate Zn(2+).

In terms of assembly, homodimer. May form a heterodimer with NAP1. Interacts with TKB1 and IKBKE. Weakly interacts with DDX3X.

In terms of biological role, adapter protein which constitutively binds TBK1 and IKBKE playing a role in antiviral innate immunity. Essential for the efficient induction of IRF-dependent transcription following infection with Sendai virus. This chain is TANK-binding kinase 1-binding protein 1, found in Mus musculus (Mouse).